Consider the following 278-residue polypeptide: Hydroxyethylthiazole kinase (278 aa).

Met-48 contributes to the substrate binding site. Arg-124 and Thr-175 together coordinate ATP. Residue Gly-202 coordinates substrate.

It belongs to the Thz kinase family. Mg(2+) is required as a cofactor.

It carries out the reaction 5-(2-hydroxyethyl)-4-methylthiazole + ATP = 4-methyl-5-(2-phosphooxyethyl)-thiazole + ADP + H(+). It functions in the pathway cofactor biosynthesis; thiamine diphosphate biosynthesis; 4-methyl-5-(2-phosphoethyl)-thiazole from 5-(2-hydroxyethyl)-4-methylthiazole: step 1/1. Catalyzes the phosphorylation of the hydroxyl group of 4-methyl-5-beta-hydroxyethylthiazole (THZ). The protein is Hydroxyethylthiazole kinase of Clostridium botulinum (strain Alaska E43 / Type E3).